A 119-amino-acid chain; its full sequence is Ribonuclease pancreatic (119 aa).

Gln-1 carries the pyrrolidone carboxylic acid modification. The active-site Proton acceptor is the His-10. 3 cysteine pairs are disulfide-bonded: Cys-25/Cys-80, Cys-39/Cys-91, and Cys-57/Cys-106. 40–44 (KTRNT) contributes to the substrate binding site. His-113 serves as the catalytic Proton donor.

This sequence belongs to the pancreatic ribonuclease family. As to quaternary structure, monomer. Interacts with and forms tight 1:1 complexes with RNH1. Dimerization of two such complexes may occur. Interaction with RNH1 inhibits this protein. As to expression, pancreas.

The protein localises to the secreted. It carries out the reaction an [RNA] containing cytidine + H2O = an [RNA]-3'-cytidine-3'-phosphate + a 5'-hydroxy-ribonucleotide-3'-[RNA].. It catalyses the reaction an [RNA] containing uridine + H2O = an [RNA]-3'-uridine-3'-phosphate + a 5'-hydroxy-ribonucleotide-3'-[RNA].. Functionally, endonuclease that catalyzes the cleavage of RNA on the 3' side of pyrimidine nucleotides. Acts on single-stranded and double-stranded RNA. The sequence is that of Ribonuclease pancreatic from Iguana iguana (Common iguana).